A 163-amino-acid chain; its full sequence is Endoribonuclease YbeY (163 aa).

Residues His119, His123, and His129 each contribute to the Zn(2+) site.

The protein belongs to the endoribonuclease YbeY family. Zn(2+) serves as cofactor.

The protein localises to the cytoplasm. In terms of biological role, single strand-specific metallo-endoribonuclease involved in late-stage 70S ribosome quality control and in maturation of the 3' terminus of the 16S rRNA. The sequence is that of Endoribonuclease YbeY from Actinobacillus pleuropneumoniae serotype 5b (strain L20).